We begin with the raw amino-acid sequence, 189 residues long: Elongation factor P (189 aa).

This sequence belongs to the elongation factor P family.

The protein localises to the cytoplasm. It participates in protein biosynthesis; polypeptide chain elongation. Involved in peptide bond synthesis. Stimulates efficient translation and peptide-bond synthesis on native or reconstituted 70S ribosomes in vitro. Probably functions indirectly by altering the affinity of the ribosome for aminoacyl-tRNA, thus increasing their reactivity as acceptors for peptidyl transferase. This Rhizobium etli (strain ATCC 51251 / DSM 11541 / JCM 21823 / NBRC 15573 / CFN 42) protein is Elongation factor P.